We begin with the raw amino-acid sequence, 274 residues long: Large ribosomal subunit protein uL2 (274 aa).

The disordered stretch occupies residues 223 to 274; the sequence is VAMNPVDHPHGGGEGRTSGGRHPVTPWGVPTKGYKTRSNKRTDKYIVRRRNK.

Belongs to the universal ribosomal protein uL2 family. In terms of assembly, part of the 50S ribosomal subunit. Forms a bridge to the 30S subunit in the 70S ribosome.

Its function is as follows. One of the primary rRNA binding proteins. Required for association of the 30S and 50S subunits to form the 70S ribosome, for tRNA binding and peptide bond formation. It has been suggested to have peptidyltransferase activity; this is somewhat controversial. Makes several contacts with the 16S rRNA in the 70S ribosome. In Shewanella oneidensis (strain ATCC 700550 / JCM 31522 / CIP 106686 / LMG 19005 / NCIMB 14063 / MR-1), this protein is Large ribosomal subunit protein uL2.